A 629-amino-acid polypeptide reads, in one-letter code: Forkhead box protein O1-B (629 aa).

Disordered regions lie at residues 1–54 (MAEP…PEQG), 88–134 (CAHP…SRRN), 211–308 (SWWM…SPFL), and 359–397 (KNNT…QPQV). A compositionally biased stretch (polar residues) spans 36-46 (QPGNSNTSSPA). 2 stretches are compositionally biased toward low complexity: residues 90 to 107 (HPQQ…THPQ) and 115 to 133 (PASG…SSRR). The fork-head DNA-binding region spans 136–230 (WGNMSYADLI…KSGKSPRRRA (95 aa)). A compositionally biased stretch (basic residues) spans 240 to 251 (TKSRGRAAKKKM). 3 stretches are compositionally biased toward polar residues: residues 291–302 (TRASSDASTLSG), 359–377 (KNNT…SPLM), and 385–397 (SYTS…QPQV).

It localises to the cytoplasm. The protein localises to the nucleus. In terms of biological role, transcription factor that regulates metabolic homeostasis in response to oxidative stress. Binds to the consensus sequence 5'-TT[G/A]TTTTG-3' and the related Daf-16 family binding element (DBE) with consensus sequence 5'-TT[G/A]TTTAC-3'. Main regulator of redox balance and osteoblast numbers and controls bone mass. Orchestrates the endocrine function of the skeleton in regulating glucose metabolism. May act as a positive regulator of apoptosis in cardiac smooth muscle cells as a result of its transcriptional activation of pro-apoptotic genes. The sequence is that of Forkhead box protein O1-B (foxo1b) from Danio rerio (Zebrafish).